The following is a 381-amino-acid chain: F-box/LRR-repeat protein At4g14103 (381 aa).

In terms of domain architecture, F-box spans 7-60 (RDVISSLPDDISSHILSFLPTKEAASTSVLSKKWRYLFAFVPNLDLDDSVYLNP). LRR repeat units follow at residues 118–146 (DLHL…KLRF), 171–196 (HFEE…VLDD), 218–243 (SWQE…KFTD), 249–274 (YPKV…LINY), 299–330 (TLYL…TIES), and 331–356 (NPRV…IFQG).

The polypeptide is F-box/LRR-repeat protein At4g14103 (Arabidopsis thaliana (Mouse-ear cress)).